The primary structure comprises 876 residues: MGKSLVIVESPAKAKTINKYLGKDFIVKSSVGHVRDLPTAGQTATPTGKAAAASTKKASTTDKEQQKREKERAALIKKMGVDPYHGWQANYQILPGKEKVVAELQKLAKDADSVYLATDLDREGEAIAWHLREIIGGDEKRYKRVVFNEITKNAIQQAFKQPGELNMDGVNAQQARRFMDRVVGFMVSPLLWKKVARGLSAGRVQSVAVKLLVEREREIKAFVPEEFWDINADTLTADKQDFRLLVAQKDGLAFKPVNETEALAAVAALNKAQYEVCKREDKPTTSKPSAPFITSTLQQAASTRLGYGVKKTMMLAQRLYEAGYITYMRTDSTNLSAEAVENLRGYITKHYGEAYLPSQPNVYGSKQNAQEAHEAIRPSDVTVTADDLEGMEADAHKLYALIWNQFVACQMTPAQYDSTTVSVKAAEYTLKAKGRILKFDGWTRVQRPLGKNEDQILPPVKVGDSLKLVSLDPKQHFTKPPARYTEAALVKELEKRGIGRPSTYASIISTIQDRGYVKVDQRRFFAEKMGEIVTDRLDENFDDLMNYDFTARMEEKLDQIAEGEVNWTAVLDEFFADFSRDLETAEQDESLGGMKPNHIVMTNILCPTCSRPMGIRTASTGVFLGCSGYGLPPKERCKTTINLGDEEGVINVLEEDVETAALRAKKRCPICETAMDAYLIDDKRKLHVCGNNPNCEGFIVEEGEFKVKGYEGPTVECDKCGSDMVLKNGRFGKYMGCTNDACKNTRKILKNGEVAPPKEEPVHFPELPCENSDAYFVLRDGASGLFFAASNFPKSRETRAPLVEELKRFAERLPEKYQYLTSAPAHDPDGLPAVVRFSRKEKEHYVRTETEGKPSGWMAVYQEGKWLVTDKRKNAK.

A Toprim domain is found at 3–150 (KSLVIVESPA…RYKRVVFNEI (148 aa)). Residue Glu-9 participates in Mg(2+) binding. The segment at 37–69 (LPTAGQTATPTGKAAAASTKKASTTDKEQQKRE) is disordered. The span at 38–58 (PTAGQTATPTGKAAAASTKKA) shows a compositional bias: low complexity. Residues 59–69 (STTDKEQQKRE) are compositionally biased toward basic and acidic residues. Asp-119 serves as a coordination point for Mg(2+). The Topo IA-type catalytic domain occupies 166–582 (NMDGVNAQQA…EFFADFSRDL (417 aa)). Residues 200–205 (SAGRVQ) form an interaction with DNA region. Residue Tyr-327 is the O-(5'-phospho-DNA)-tyrosine intermediate of the active site. C4-type zinc fingers lie at residues 668-695 (CPICETAMDAYLIDDKRKLHVCGNNPNC) and 717-742 (CDKCGSDMVLKNGRFGKYMGCTNDAC).

The protein belongs to the type IA topoisomerase family. As to quaternary structure, monomer. It depends on Mg(2+) as a cofactor.

The enzyme catalyses ATP-independent breakage of single-stranded DNA, followed by passage and rejoining.. In terms of biological role, releases the supercoiling and torsional tension of DNA, which is introduced during the DNA replication and transcription, by transiently cleaving and rejoining one strand of the DNA duplex. Introduces a single-strand break via transesterification at a target site in duplex DNA. The scissile phosphodiester is attacked by the catalytic tyrosine of the enzyme, resulting in the formation of a DNA-(5'-phosphotyrosyl)-enzyme intermediate and the expulsion of a 3'-OH DNA strand. The free DNA strand then undergoes passage around the unbroken strand, thus removing DNA supercoils. Finally, in the religation step, the DNA 3'-OH attacks the covalent intermediate to expel the active-site tyrosine and restore the DNA phosphodiester backbone. This chain is DNA topoisomerase 1, found in Vibrio cholerae serotype O1 (strain ATCC 39315 / El Tor Inaba N16961).